The primary structure comprises 158 residues: Transcription elongation factor GreA (158 aa).

It belongs to the GreA/GreB family.

Its function is as follows. Necessary for efficient RNA polymerase transcription elongation past template-encoded arresting sites. The arresting sites in DNA have the property of trapping a certain fraction of elongating RNA polymerases that pass through, resulting in locked ternary complexes. Cleavage of the nascent transcript by cleavage factors such as GreA or GreB allows the resumption of elongation from the new 3'terminus. GreA releases sequences of 2 to 3 nucleotides. In Acinetobacter baumannii (strain SDF), this protein is Transcription elongation factor GreA.